The sequence spans 1976 residues: MAQRTGLEDPERYLFVDRAVIYNPATQADWTAKKLVWIPSERHGFEAASIKEERGDEVMVELAENGKKAMVNKDDIQKMNPPKFSKVEDMAELTCLNEASVLHNLKDRYYSGLIYTYSGLFCVVINPYKNLPIYSENIIEMYRGKKRHEMPPHIYAISESAYRCMLQDREDQSILCTGESGAGKTENTKKVIQYLAHVASSHKGRKDHNIPGELERQLLQANPILESFGNAKTVKNDNSSRFGKFIRINFDVTGYIVGANIETYLLEKSRAVRQAKDERTFHIFYQLLSGAGEHLKSDLLLEGFNNYRFLSNGYIPIPGQQDKDNFQETMEAMHIMGFSHEEILSMLKVVSSVLQFGNISFKKERNTDQASMPENTVAQKLCHLLGMNVMEFTRAILTPRIKVGRDYVQKAQTKEQADFAVEALAKATYERLFRWLVHRINKALDRTKRQGASFIGILDIAGFEIFELNSFEQLCINYTNEKLQQLFNHTMFILEQEEYQREGIEWNFIDFGLDLQPCIDLIERPANPPGVLALLDEECWFPKATDKTFVEKLVQEQGSHSKFQKPRQLKDKADFCIIHYAGKVDYKADEWLMKNMDPLNDNVATLLHQSSDRFVAELWKDVDRIVGLDQVTGMTETAFGSAYKTKKGMFRTVGQLYKESLTKLMATLRNTNPNFVRCIIPNHEKRAGKLDPHLVLDQLRCNGVLEGIRICRQGFPNRIVFQEFRQRYEILTPNAIPKGFMDGKQACERMIRALELDPNLYRIGQSKIFFRAGVLAHLEEERDLKITDIIIFFQAVCRGYLARKAFAKKQQQLSALKVLQRNCAAYLKLRHWQWWRVFTKVKPLLQVTRQEEELQAKDEELLKVKEKQTKVEGELEEMERKHQQLLEEKNILAEQLQAETELFAEAEEMRARLAAKKQELEEILHDLESRVEEEEERNQILQNEKKKMQAHIQDLEEQLDEEEGARQKLQLEKVTAEAKIKKMEEEILLLEDQNSKFIKEKKLMEDRIAECSSQLAEEEEKAKNLAKIRNKQEVMISDLEERLKKEEKTRQELEKAKRKLDGETTDLQDQIAELQAQIDELKLQLAKKEEELQGALARGDDETLHKNNALKVVRELQAQIAELQEDFESEKASRNKAEKQKRDLSEELEALKTELEDTLDTTAAQQELRTKREQEVAELKKALEEETKNHEAQIQDMRQRHATALEELSEQLEQAKRFKANLEKNKQGLETDNKELACEVKVLQQVKAESEHKRKKLDAQVQELHAKVSEGDRLRVELAEKASKLQNELDNVSTLLEEAEKKGIKFAKDAASLESQLQDTQELLQEETRQKLNLSSRIRQLEEEKNSLQEQQEEEEEARKNLEKQVLALQSQLADTKKKVDDDLGTIESLEEAKKKLLKDAEALSQRLEEKALAYDKLEKTKNRLQQELDDLTVDLDHQRQVASNLEKKQKKFDQLLAEEKSISARYAEERDRAEAEAREKETKALSLARALEEALEAKEEFERQNKQLRADMEDLMSSKDDVGKNVHELEKSKRALEQQVEEMRTQLEELEDELQATEDAKLRLEVNMQAMKAQFERDLQTRDEQNEEKKRLLIKQVRELEAELEDERKQRALAVASKKKMEIDLKDLEAQIEAANKARDEVIKQLRKLQAQMKDYQRELEEARASRDEIFAQSKESEKKLKSLEAEILQLQEELASSERARRHAEQERDELADEITNSASGKSALLDEKRRLEARIAQLEEELEEEQSNMELLNDRFRKTTLQVDTLNAELAAERSAAQKSDNARQQLERQNKELKAKLQELEGAVKSKFKATISALEAKIGQLEEQLEQEAKERAAANKLVRRTEKKLKEIFMQVEDERRHADQYKEQMEKANARMKQLKRQLEEAEEEATRANASRRKLQRELDDATEANEGLSREVSTLKNRLRRGGPISFSSSRSGRRQLHLEGASLELSDDDTESKTSDVNETQPPQSE.

Arg18 carries the post-translational modification Omega-N-methylarginine. The Myosin N-terminal SH3-like domain maps to 31-81 (TAKKLVWIPSERHGFEAASIKEERGDEVMVELAENGKKAMVNKDDIQKMNP). One can recognise a Myosin motor domain in the interval 85–783 (SKVEDMAELT…VLAHLEEERD (699 aa)). An ATP-binding site is contributed by 178 to 185 (GESGAGKT). At Leu214 the chain carries Phosphoserine. Lys442 is subject to N6-acetyllysine. The actin-binding stretch occupies residues 661–683 (LTKLMATLRNTNPNFVRCIIPNH). Residues 786–815 (ITDIIIFFQAVCRGYLARKAFAKKQQQLSA) enclose the IQ domain. A coiled-coil region spans residues 845-1976 (LQVTRQEEEL…VNETQPPQSE (1132 aa)). Positions 1127–1147 (FESEKASRNKAEKQKRDLSEE) are disordered. The segment covering 1129–1147 (SEKASRNKAEKQKRDLSEE) has biased composition (basic and acidic residues). A Phosphoserine modification is found at Ser1145. Residues Lys1241, Lys1301, and Lys1645 each carry the N6-acetyllysine modification. Disordered regions lie at residues 1697 to 1728 (ASSE…SALL) and 1872 to 1976 (MEKA…PQSE). The span at 1698-1708 (SSERARRHAEQ) shows a compositional bias: basic and acidic residues. The residue at position 1930 (Arg1930) is an Omega-N-methylarginine. A phosphoserine mark is found at Ser1935, Ser1937, Ser1938, and Ser1939. Arg1940 carries the omega-N-methylarginine modification. Phosphoserine is present on residues Ser1952 and Ser1956. Residue Thr1960 is modified to Phosphothreonine. Residues 1967–1976 (VNETQPPQSE) are compositionally biased toward polar residues. At Ser1975 the chain carries Phosphoserine.

It belongs to the TRAFAC class myosin-kinesin ATPase superfamily. Myosin family. As to quaternary structure, myosin is a hexameric protein that consists of 2 heavy chain subunits (MHC), 2 alkali light chain subunits (MLC) and 2 regulatory light chain subunits (MLC-2). Interacts with PLEKHG6. Interacts with ECPAS. Interacts with KIF26B. Interacts with LARP6. Interacts with MCC. Interacts with CFAP95. In terms of assembly, (Microbial infection) Interacts with herpes simplex virus 1/HHV-1 envelope glycoprotein B. Post-translationally, phosphorylated by ABL2. Isoform 1 is expressed in cerebellum and spinal chord. Isoform 2 is expressed in cerebrum and retina. Isoform 3 is expressed in the cerebrum and to a much lower extent in cerebellum.

The protein localises to the cell projection. The protein resides in the lamellipodium. It localises to the cell membrane. Its function is as follows. Cellular myosin that appears to play a role in cytokinesis, cell shape, and specialized functions such as secretion and capping. Involved with LARP6 in the stabilization of type I collagen mRNAs for CO1A1 and CO1A2. During cell spreading, plays an important role in cytoskeleton reorganization, focal contacts formation (in the central part but not the margins of spreading cells), and lamellipodial extension; this function is mechanically antagonized by MYH9. Functionally, (Microbial infection) Acts as a receptor for herpes simplex virus 1/HHV-1 envelope glycoprotein B. This chain is Myosin-10 (MYH10), found in Homo sapiens (Human).